Consider the following 349-residue polypeptide: Protein DMR6-LIKE OXYGENASE 1 (349 aa).

Positions 197 to 296 (HAQHMAFNYY…RLSIPTFYFP (100 aa)) constitute a Fe2OG dioxygenase domain. A 2-oxoglutarate-binding site is contributed by Y206. The Fe cation site is built by H221, D223, and H277. The 2-oxoglutarate site is built by R287 and S289.

This sequence belongs to the iron/ascorbate-dependent oxidoreductase family. It depends on L-ascorbate as a cofactor. The cofactor is Fe(2+).

It carries out the reaction salicylate + NADH + O2 + H(+) = 2,3-dihydroxybenzoate + NAD(+) + H2O. In terms of biological role, converts salicylic acid (SA) to both 2,3-dihydroxybenzoic acid (2,3-DHBA) and 2,5-DHBA in vitro but only 2,3-DHBA in vivo. Component of a negative feedback regulation system of SA levels during senescence. Regulates both onset and progression of leaf senescence. Negative regulator of defense against Hyaloperonospora arabidopsidis. (Microbial infection) Confers susceptibility to the downy mildew pathogen Hyaloperonospora arabidopsidis. The chain is Protein DMR6-LIKE OXYGENASE 1 from Arabidopsis thaliana (Mouse-ear cress).